The primary structure comprises 387 residues: Pepsin A-5 (387 aa).

A signal peptide spans 1–15; that stretch reads MKWLWVLGLVALSEC. Residues 16-62 constitute a propeptide, activation peptide; it reads LVKIPLMKIKSMRENLRESQVLKDYLEKYPRSRAHVLLEQRRNPAVT. The Peptidase A1 domain occupies 74 to 384; it reads YIGIISIGTP…DRANNRIGLA (311 aa). Asp92 is a catalytic residue. 2 disulfides stabilise this stretch: Cys105/Cys110 and Cys266/Cys270. The active site involves Asp275. A disulfide bond links Cys309 and Cys343.

It belongs to the peptidase A1 family. Expressed in glandular chief cells of the neonatal stomach. Expressed in yolk sacs of the placenta (at protein level).

The protein localises to the secreted. It carries out the reaction Preferential cleavage: hydrophobic, preferably aromatic, residues in P1 and P1' positions. Cleaves 1-Phe-|-Val-2, 4-Gln-|-His-5, 13-Glu-|-Ala-14, 14-Ala-|-Leu-15, 15-Leu-|-Tyr-16, 16-Tyr-|-Leu-17, 23-Gly-|-Phe-24, 24-Phe-|-Phe-25 and 25-Phe-|-Tyr-26 bonds in the B chain of insulin.. Its activity is regulated as follows. Inhibited by pepstatin A. Shows particularly broad specificity; although bonds involving phenylalanine and leucine are preferred, many others are also cleaved to some extent. May play a role as a specialized neonatal digestive enzyme. The polypeptide is Pepsin A-5 (Mus musculus (Mouse)).